The sequence spans 360 residues: MATTVHLSSFSLFIQSRGRRDNSISSVKSLKKRTGLSPSSALTSQGGRDMIPPEGKCNDHNSAFDFKLYMIRKAESVNAALDVSVPLREPLTVQEAVRYSLLAGGKRVRPLLCIAVCELVGGDEATAMSAACAVEMIHTSSLIHDDLPCMDNADLRRGKPTNHKVYGEDMAVLAGDALLALAFEHMTVVSSGLVAPERMIRAVVELARAIGTTGLVAGQMIDLASERLNPDKVGLEHLEFIHLHKTAALLEAAAVLGVIMGGGTEEEIEKLRKYARCIGLLFQVVDDILDVTKSTEELGKTAGKDVMAGKLTYPRLIGLERSKEVAEKLRREAEEQLLGFDPSKAAPLVALASYIACRHN.

The N-terminal 39 residues, 1 to 39 (MATTVHLSSFSLFIQSRGRRDNSISSVKSLKKRTGLSPS), are a transit peptide targeting the chloroplast. Residues 24-54 (ISSVKSLKKRTGLSPSSALTSQGGRDMIPPE) are disordered. Over residues 36-46 (LSPSSALTSQG) the composition is skewed to polar residues. Residues Lys106, Arg109, and His138 each contribute to the isopentenyl diphosphate site. Mg(2+) is bound by residues Asp145 and Asp151. Position 156 (Arg156) interacts with dimethylallyl diphosphate. Arg157 serves as a coordination point for isopentenyl diphosphate. Dimethylallyl diphosphate is bound by residues Lys245, Thr246, Gln283, Lys300, and Lys310.

It belongs to the FPP/GGPP synthase family. Monomer. Mg(2+) is required as a cofactor. In terms of tissue distribution, mainly expressed in roots.

It localises to the plastid. The protein resides in the chloroplast. It catalyses the reaction isopentenyl diphosphate + dimethylallyl diphosphate = (2E)-geranyl diphosphate + diphosphate. The catalysed reaction is isopentenyl diphosphate + (2E)-geranyl diphosphate = (2E,6E)-farnesyl diphosphate + diphosphate. The enzyme catalyses isopentenyl diphosphate + (2E,6E)-farnesyl diphosphate = (2E,6E,10E)-geranylgeranyl diphosphate + diphosphate. The protein operates within isoprenoid biosynthesis; farnesyl diphosphate biosynthesis; farnesyl diphosphate from geranyl diphosphate and isopentenyl diphosphate: step 1/1. It functions in the pathway isoprenoid biosynthesis; geranyl diphosphate biosynthesis; geranyl diphosphate from dimethylallyl diphosphate and isopentenyl diphosphate: step 1/1. It participates in isoprenoid biosynthesis; geranylgeranyl diphosphate biosynthesis; geranylgeranyl diphosphate from farnesyl diphosphate and isopentenyl diphosphate: step 1/1. In terms of biological role, catalyzes the trans-addition of the three molecules of IPP onto DMAPP to form geranylgeranyl pyrophosphate. This Arabidopsis thaliana (Mouse-ear cress) protein is Geranylgeranyl pyrophosphate synthase 3, chloroplastic (GGPP3).